The sequence spans 963 residues: Iron-responsive element-binding protein 2 (963 aa).

Residues Cys-512, Cys-578, and Cys-581 each contribute to the [4Fe-4S] cluster site.

Belongs to the aconitase/IPM isomerase family. Interacts with RBCK1 only in iron-rich conditions. Interacts (when associated with the 4Fe-4S) with FBXL5. Interacts with CIAO1 and CIAO2A. Requires [4Fe-4S] cluster as cofactor. Ubiquitinated and degraded by the proteasome in presence of high level of iron and oxygen. Ubiquitinated by a SCF complex containing FBXL5. Upon iron and oxygen depletion FBXL5 is degraded, preventing ubiquitination and allowing its RNA-binding activity. Ubiquitously expressed in rat tissues, the highest amounts present in skeletal muscle and heart.

It localises to the cytoplasm. Functionally, RNA-binding protein that binds to iron-responsive elements (IRES), which are stem-loop structures found in the 5'-UTR of ferritin, and delta aminolevulinic acid synthase mRNAs, and in the 3'-UTR of transferrin receptor mRNA. Binding to the IRE element in ferritin results in the repression of its mRNA translation. Binding of the protein to the transferrin receptor mRNA inhibits the degradation of this otherwise rapidly degraded mRNA. The protein is Iron-responsive element-binding protein 2 (Ireb2) of Rattus norvegicus (Rat).